Consider the following 282-residue polypeptide: Serine/arginine-rich splicing factor 8 (282 aa).

S2 carries the N-acetylserine modification. Phosphoserine occurs at positions 2 and 26. The 79-residue stretch at 14–92 (ITLKVDNLTY…RELRVQVARY (79 aa)) folds into the RRM domain. The interval 91-282 (RYGRRDLPRS…SPEEEGQMSS (192 aa)) is disordered. The span at 93 to 107 (GRRDLPRSRQGEPRG) shows a compositional bias: basic and acidic residues. 2 stretches are compositionally biased toward basic residues: residues 116–136 (RRSR…RSRS) and 144–154 (SRSRSRYRGSR). Low complexity-rich tracts occupy residues 155 to 177 (YSRS…PYSR) and 185 to 200 (YGGS…NSRY). S156, S158, S171, S173, and S196 each carry phosphoserine. Basic residues predominate over residues 201–210 (SRYHSSRSHS). Low complexity-rich tracts occupy residues 211–227 (KSGS…SKSS) and 234–255 (SSSV…SPPR). Residues 256–271 (VSKRKSKSRSRSKRPP) are compositionally biased toward basic residues. S273 bears the Phosphoserine mark.

The protein belongs to the splicing factor SR family. Strongly expressed in pancreas, spleen and prostate. Weakly expressed in lung, liver and thymus.

The protein localises to the nucleus. Involved in pre-mRNA alternative splicing. This chain is Serine/arginine-rich splicing factor 8 (SRSF8), found in Homo sapiens (Human).